The sequence spans 448 residues: Antizyme inhibitor 1 (448 aa).

The protein belongs to the Orn/Lys/Arg decarboxylase class-II family. ODC antizyme inhibitor subfamily. Monomer. Interacts with OAZ1 and OAZ3; this interaction disrupts the interaction between the antizyme and ODC1. Ubiquitinated, leading to its proteasomal degradation; a process that is reduced in presence of antizyme OAZ1. In terms of tissue distribution, expressed during testis development.

It localises to the nucleus. Its function is as follows. Antizyme inhibitor (AZI) protein that positively regulates ornithine decarboxylase (ODC) activity and polyamine uptake. AZI is an enzymatically inactive ODC homolog that counteracts the negative effect of ODC antizymes (AZs) OAZ1, OAZ2 and OAZ3 on ODC activity by competing with ODC for antizyme-binding. Inhibits antizyme-dependent ODC degradation and releases ODC monomers from their inactive complex with antizymes, leading to formation of the catalytically active ODC homodimer and restoring polyamine production. In Mus musculus (Mouse), this protein is Antizyme inhibitor 1 (Azin1).